Consider the following 197-residue polypeptide: Holliday junction branch migration complex subunit RuvA (197 aa).

The segment at 1–64 (MIDSIVGTIQ…LSELECYGFL (64 aa)) is domain I. The segment at 65–143 (TREERELFLK…KEFKVASTSG (79 aa)) is domain II. The tract at residues 144–152 (TEEKTYEKL) is flexible linker. Positions 152-197 (LEEISLALLSLGYEIDEINQVLSSEDFSELSLEDGIKLALKKLSKI) are domain III.

The protein belongs to the RuvA family. Homotetramer. Forms an RuvA(8)-RuvB(12)-Holliday junction (HJ) complex. HJ DNA is sandwiched between 2 RuvA tetramers; dsDNA enters through RuvA and exits via RuvB. An RuvB hexamer assembles on each DNA strand where it exits the tetramer. Each RuvB hexamer is contacted by two RuvA subunits (via domain III) on 2 adjacent RuvB subunits; this complex drives branch migration. In the full resolvosome a probable DNA-RuvA(4)-RuvB(12)-RuvC(2) complex forms which resolves the HJ.

The protein localises to the cytoplasm. Functionally, the RuvA-RuvB-RuvC complex processes Holliday junction (HJ) DNA during genetic recombination and DNA repair, while the RuvA-RuvB complex plays an important role in the rescue of blocked DNA replication forks via replication fork reversal (RFR). RuvA specifically binds to HJ cruciform DNA, conferring on it an open structure. The RuvB hexamer acts as an ATP-dependent pump, pulling dsDNA into and through the RuvAB complex. HJ branch migration allows RuvC to scan DNA until it finds its consensus sequence, where it cleaves and resolves the cruciform DNA. The protein is Holliday junction branch migration complex subunit RuvA of Caldicellulosiruptor saccharolyticus (strain ATCC 43494 / DSM 8903 / Tp8T 6331).